Consider the following 166-residue polypeptide: Small ribosomal subunit protein uS5 (166 aa).

An S5 DRBM domain is found at 11-74 (LQEKLIAVNR…EKARRNMMNV (64 aa)).

This sequence belongs to the universal ribosomal protein uS5 family. In terms of assembly, part of the 30S ribosomal subunit. Contacts proteins S4 and S8.

With S4 and S12 plays an important role in translational accuracy. In terms of biological role, located at the back of the 30S subunit body where it stabilizes the conformation of the head with respect to the body. This Sodalis glossinidius (strain morsitans) protein is Small ribosomal subunit protein uS5.